Consider the following 398-residue polypeptide: Glucose-1-phosphate adenylyltransferase (398 aa).

Residues Y100, G165, 180–181 (EK), and S191 each bind alpha-D-glucose 1-phosphate.

This sequence belongs to the bacterial/plant glucose-1-phosphate adenylyltransferase family. In terms of assembly, homotetramer.

The catalysed reaction is alpha-D-glucose 1-phosphate + ATP + H(+) = ADP-alpha-D-glucose + diphosphate. It participates in glycan biosynthesis; glycogen biosynthesis. Its function is as follows. Involved in the biosynthesis of ADP-glucose, a building block required for the elongation reactions to produce glycogen. Catalyzes the reaction between ATP and alpha-D-glucose 1-phosphate (G1P) to produce pyrophosphate and ADP-Glc. This Desulfitobacterium hafniense (strain DSM 10664 / DCB-2) protein is Glucose-1-phosphate adenylyltransferase.